A 427-amino-acid polypeptide reads, in one-letter code: 3-phosphoshikimate 1-carboxyvinyltransferase (427 aa).

Residues lysine 22, serine 23, and arginine 27 each contribute to the 3-phosphoshikimate site. Lysine 22 lines the phosphoenolpyruvate pocket. Phosphoenolpyruvate-binding residues include glycine 96 and arginine 124. Positions 169, 170, 171, 197, 313, 336, and 340 each coordinate 3-phosphoshikimate. Position 171 (glutamine 171) interacts with phosphoenolpyruvate. Aspartate 313 (proton acceptor) is an active-site residue. Arginine 344, arginine 386, and lysine 411 together coordinate phosphoenolpyruvate.

Belongs to the EPSP synthase family. In terms of assembly, monomer.

It is found in the cytoplasm. The enzyme catalyses 3-phosphoshikimate + phosphoenolpyruvate = 5-O-(1-carboxyvinyl)-3-phosphoshikimate + phosphate. It participates in metabolic intermediate biosynthesis; chorismate biosynthesis; chorismate from D-erythrose 4-phosphate and phosphoenolpyruvate: step 6/7. Its function is as follows. Catalyzes the transfer of the enolpyruvyl moiety of phosphoenolpyruvate (PEP) to the 5-hydroxyl of shikimate-3-phosphate (S3P) to produce enolpyruvyl shikimate-3-phosphate and inorganic phosphate. The chain is 3-phosphoshikimate 1-carboxyvinyltransferase from Salmonella heidelberg (strain SL476).